A 389-amino-acid chain; its full sequence is Alpha-2B adrenergic receptor (389 aa).

Residues 1–25 (AIAAVITFLILFTIFGNALVILAVL) traverse the membrane as a helical segment. At 26-36 (TSRSLRAPQNL) the chain is on the cytoplasmic side. The chain crosses the membrane as a helical span at residues 37 to 62 (FLVSLAAADILVATLIIPFSLANELL). At 63–72 (GYWYFWRTWC) the chain is on the extracellular side. A disulfide bridge links Cys72 with Cys151. Residues 73–95 (EVYLALDVLFCTSSIVHLCAISL) form a helical membrane-spanning segment. Residues 96-117 (DRYWAVSRALEYNSKRTPRRIK) are Cytoplasmic-facing. The helical transmembrane segment at 118 to 140 (CIILTVWLIAAAISLPPLIYKGD) threads the bilayer. Residues 141–156 (QGPQPRGRPQCMLNQE) are Extracellular-facing. Residues 157–180 (AWYILSSSIGSFFAPCLIMILVYL) traverse the membrane as a helical segment. The Cytoplasmic segment spans residues 181–353 (RIYLIAKRSN…LTREKRFTFV (173 aa)). Disordered regions lie at residues 192–218 (RGPR…PLAL) and 231–310 (DGEA…HLQQ). A compositionally biased stretch (basic and acidic residues) spans 234 to 249 (ANGHSKLTGEKERETS). Residues 354–377 (LTVVIGVFVLCWFPFFFSYSLGAI) traverse the membrane as a helical segment. At 378-386 (CPQHCKVPH) the chain is on the extracellular side. Residues 387-389 (GLF) traverse the membrane as a helical segment.

Belongs to the G-protein coupled receptor 1 family. Adrenergic receptor subfamily. ADRA2B sub-subfamily. As to quaternary structure, interacts with RAB26. Interacts with PPP1R9B.

The protein resides in the cell membrane. Alpha-2 adrenergic receptors mediate the catecholamine-induced inhibition of adenylate cyclase through the action of G proteins. This is Alpha-2B adrenergic receptor (ADRA2B) from Procavia capensis habessinica (Abyssinian hyrax).